A 145-amino-acid chain; its full sequence is Small ribosomal subunit protein eS19 (145 aa).

It belongs to the eukaryotic ribosomal protein eS19 family. As to quaternary structure, component of the small ribosomal subunit.

Its subcellular location is the cytoplasm. It localises to the nucleus. Component of the small ribosomal subunit. The ribosome is a large ribonucleoprotein complex responsible for the synthesis of proteins in the cell. Required for pre-rRNA processing and maturation of 40S ribosomal subunits. The protein is Small ribosomal subunit protein eS19 (rps19) of Myxine glutinosa (Atlantic hagfish).